The sequence spans 798 residues: MESTADGDKARGEEPVAEGEASDIRRGDGEFPAPEDEHPDDGEPDEPADRDDRSGESDADSGYYSADGGRDAECDGEAARPDTPTDESSAPTTPSTAVRRSSGESSPDRGGCFSHSSDSELGCATETRDPFAAGLRKCIERQAMILTGALKDAHVDPPLDSMPLTVDAVQRQLERFLFNPDPKVPREHVELATTFMPPFMTPKAIANYHIFCGNRPIPPSCKANRSGSEVLRAAENARFFKRLPRWKQGVTVDDGLGDEVSPITELKDAKLVPLRDDTSRLEWAKMRGEHVRYFCYPSLHMPPKISRMLMEVLLQPFAQEVASGPDQEDPEPVYPTAELACIVDPEGVMQPHGLARAIEVDGHGSAGRPLYRSARAYGSVFREPSSIKKAQEVLHHTFHHGFVALIRETAKVNLSNYATFHGITYNDPLNNCMLAKLMEGSDKRDYVVDSIYLFLVLTWQTAMGMWQQAIQEETIEAYREAFTRLRRAIYALETPTEISKAIVDVLMDGDRLCAEMPKLPNFTNGSQISAFRQFIMERSNIPTTAAPFLPSDFVPLSFRQAQPLLWDQVYLLQTAFFLCNHGGYLWEPEETENPNPRDRTYCPCNLCSPHRMPQHNVPLHNELLAINTFEIRTDDGKTFKLTPELWANAYLDKFEPKDYHPFEVVHFPQHEEAFSRDLTACVTKSPEILSLIRQIQASREEFLLTRGKGVYKDPDTGEVLTPQPDLQAGAARRQALPTAYADHARGAATSAEPSRALRPTSVATAAGNRTRGCSSARYRLGPTLRRRSNSSWPREWST.

Residues 1–14 show a composition bias toward basic and acidic residues; sequence MESTADGDKARGEE. A disordered region spans residues 1 to 123; sequence MESTADGDKA…SHSSDSELGC (123 aa). A compositionally biased stretch (acidic residues) spans 33 to 49; sequence APEDEHPDDGEPDEPAD. A compositionally biased stretch (basic and acidic residues) spans 68 to 80; it reads GGRDAECDGEAAR. Residues 86–105 are compositionally biased toward polar residues; sequence DESSAPTTPSTAVRRSSGES. The segment at 309–376 is binding to host EIF4G; that stretch reads LMEVLLQPFA…GRPLYRSARA (68 aa). The RRM domain occupies 379 to 497; sequence SVFREPSSIK…AIYALETPTE (119 aa). Tyr-711 carries the phosphotyrosine; by host modification. A disordered region spans residues 740–798; the sequence is YADHARGAATSAEPSRALRPTSVATAAGNRTRGCSSARYRLGPTLRRRSNSSWPREWST. Positions 789-798 are enriched in polar residues; sequence NSSWPREWST.

It belongs to the adenoviridae shutoff protein family. As to quaternary structure, monomer. Interacts with hexon protein; this interaction allows chaperoning and trimerization of hexon proteins. Interacts (via N-terminus) with host initiation factor EIF4G (via C-terminus). Interacts (via RRM domain) with viral mRNAs that contain the tripartite leader; this interaction allows ribosome shunting and expression of viral late mRNAs. In terms of processing, might be cleaved by the viral protease. Post-translationally, phosphorylated. Tyrosine phosphorylation enhances preferential binding to tripartite leader mRNAs and allows ribosome shunting. Methylated. Asymmetric dimethylation by host PRMT1 of the Arg/Gly-rich region may regulate shutoff protein binding to hexon and promote the capsid assembly in the nucleus.

The protein localises to the host cytoplasm. Functionally, protein that inhibits host translation while promoting late viral translation by ribosome shunting. Blocks host cap-dependent translation by binding to eIF4G, displacing MKNK1 from cap initiation complexes and preventing EIF4E phosphorylation. Binds to the tripartite leader sequence of viral late mRNAs and recruits host eIF4G, PABPC1/poly-A binding protein and 40S ribosomes subunits on viral mRNAs, allowing ribosome shunting and efficient translation of late viral mRNAs even though conventional translation via ribosome scanning from the cap has been shut off in the host cell. During assembly, acts as a chaperone protein that helps hexon proteins assembly into trimers. The chain is Shutoff protein from Galliformes (FAdV-10).